Here is a 547-residue protein sequence, read N- to C-terminus: MAAKQVLFGDDARAKVVQGVNILANAVKVTLGPKGRNVVLERSFGAPTVTKDGVSVAKEIELKDKFENIGAQLVKEVASKTADNAGDGTTTATVLAQAIVREGFKFVAAGFNPADLKRGIDKAVAAIVDELKALSKPTTTSKEIAQVGAISANSDADIGDIIAKAIDKVGKEGVITVEDGKSLNNELDVVEGLQFDRGYLSPYFINNPDKQVAELDNPFILLFDKKISNIRELLPVLEQVAKAGSPLLVVAEDVDGEALATLVVNTIRGILKVVAVKAPGFGDRRKAILEDIAILTGGQVIAEEVGLSLEKATLADLGQAKRVEVQKENTTLIDGAGSVEAIKARVSSIDALIAAATSDYDREKLQERKAKLAGGVAVIKVGAATEVELKEKKARVEDALHATRAAVEEGIVPGGGVALLRARAAIKDLKGDNHEQDAGIKIVLRAVEEPLRQIVANAGDEASVVVARVLEGSGNFGYNAANGQYGDLVEQGVLDPAKVTRSALQNAASVAALILTTDALVAEQADDKPATAGLPHGGPGGFGGPEF.

ATP-binding positions include 30 to 33 (TLGP), K51, 87 to 91 (DGTTT), G415, 479 to 481 (NAA), and D495. A disordered region spans residues 528 to 547 (KPATAGLPHGGPGGFGGPEF). The segment covering 535–547 (PHGGPGGFGGPEF) has biased composition (gly residues).

Belongs to the chaperonin (HSP60) family. Forms a cylinder of 14 subunits composed of two heptameric rings stacked back-to-back. Interacts with the co-chaperonin GroES.

It is found in the cytoplasm. It carries out the reaction ATP + H2O + a folded polypeptide = ADP + phosphate + an unfolded polypeptide.. Together with its co-chaperonin GroES, plays an essential role in assisting protein folding. The GroEL-GroES system forms a nano-cage that allows encapsulation of the non-native substrate proteins and provides a physical environment optimized to promote and accelerate protein folding. This is Chaperonin GroEL 2 from Azoarcus sp. (strain BH72).